The primary structure comprises 554 residues: Probable phospholipase D F09G2.8 (554 aa).

At 1–123 (MPLRLINFRQ…GNSRNRIIKP (123 aa)) the chain is on the cytoplasmic side. Residues 124-144 (ACVPISIVSLFIIALVFLPLF) form a helical; Signal-anchor for type II membrane protein membrane-spanning segment. The Extracellular segment spans residues 145–554 (NEEDLASPIK…DWNSEYSKDL (410 aa)). 4 N-linked (GlcNAc...) asparagine glycosylation sites follow: Asn-181, Asn-208, Asn-244, and Asn-266. In terms of domain architecture, PLD phosphodiesterase 1 spans 272–299 (GSGIIHTKFILSDIATLYIGSANMDWKS). Residues His-277, Lys-279, and Asp-284 contribute to the active site. Asn-333, Asn-350, Asn-468, and Asn-513 each carry an N-linked (GlcNAc...) asparagine glycan. One can recognise a PLD phosphodiesterase 2 domain in the interval 492–518 (FTRVNHAKYMVTEDIAYIGTSNWSGDY).

Belongs to the phospholipase D family.

It localises to the membrane. The enzyme catalyses a 1,2-diacyl-sn-glycero-3-phosphocholine + H2O = a 1,2-diacyl-sn-glycero-3-phosphate + choline + H(+). The polypeptide is Probable phospholipase D F09G2.8 (Caenorhabditis elegans).